A 398-amino-acid polypeptide reads, in one-letter code: 4-hydroxy-3-methylbut-2-enyl diphosphate reductase (398 aa).

[4Fe-4S] cluster is bound at residue C66. H96 provides a ligand contact to (2E)-4-hydroxy-3-methylbut-2-enyl diphosphate. H96 is a binding site for dimethylallyl diphosphate. Residue H96 participates in isopentenyl diphosphate binding. Position 157 (C157) interacts with [4Fe-4S] cluster. H185 serves as a coordination point for (2E)-4-hydroxy-3-methylbut-2-enyl diphosphate. H185 contacts dimethylallyl diphosphate. H185 contacts isopentenyl diphosphate. Catalysis depends on E187, which acts as the Proton donor. T250 contributes to the (2E)-4-hydroxy-3-methylbut-2-enyl diphosphate binding site. C288 provides a ligand contact to [4Fe-4S] cluster. Positions 317, 318, 319, and 380 each coordinate (2E)-4-hydroxy-3-methylbut-2-enyl diphosphate. 4 residues coordinate dimethylallyl diphosphate: S317, S318, N319, and S380. Residues S317, S318, N319, and S380 each contribute to the isopentenyl diphosphate site.

This sequence belongs to the IspH family. It depends on [4Fe-4S] cluster as a cofactor.

It catalyses the reaction isopentenyl diphosphate + 2 oxidized [2Fe-2S]-[ferredoxin] + H2O = (2E)-4-hydroxy-3-methylbut-2-enyl diphosphate + 2 reduced [2Fe-2S]-[ferredoxin] + 2 H(+). The enzyme catalyses dimethylallyl diphosphate + 2 oxidized [2Fe-2S]-[ferredoxin] + H2O = (2E)-4-hydroxy-3-methylbut-2-enyl diphosphate + 2 reduced [2Fe-2S]-[ferredoxin] + 2 H(+). It participates in isoprenoid biosynthesis; dimethylallyl diphosphate biosynthesis; dimethylallyl diphosphate from (2E)-4-hydroxy-3-methylbutenyl diphosphate: step 1/1. The protein operates within isoprenoid biosynthesis; isopentenyl diphosphate biosynthesis via DXP pathway; isopentenyl diphosphate from 1-deoxy-D-xylulose 5-phosphate: step 6/6. Catalyzes the conversion of 1-hydroxy-2-methyl-2-(E)-butenyl 4-diphosphate (HMBPP) into a mixture of isopentenyl diphosphate (IPP) and dimethylallyl diphosphate (DMAPP). Acts in the terminal step of the DOXP/MEP pathway for isoprenoid precursor biosynthesis. The polypeptide is 4-hydroxy-3-methylbut-2-enyl diphosphate reductase (Prochlorococcus marinus subsp. pastoris (strain CCMP1986 / NIES-2087 / MED4)).